The sequence spans 305 residues: HPr kinase/phosphorylase (305 aa).

Residues His-138 and Lys-159 contribute to the active site. Residue 153–160 coordinates ATP; sequence GESGIGKS. Ser-160 contacts Mg(2+). The Proton acceptor; for phosphorylation activity. Proton donor; for dephosphorylation activity role is filled by Asp-177. The segment at 201–210 is important for the catalytic mechanism of both phosphorylation and dephosphorylation; that stretch reads IEIRGIGILD. Mg(2+) is bound at residue Glu-202. Residue Arg-243 is part of the active site. The interval 264–269 is important for the catalytic mechanism of dephosphorylation; it reads PVRPGR.

It belongs to the HPrK/P family. As to quaternary structure, homohexamer. The cofactor is Mg(2+).

It catalyses the reaction [HPr protein]-L-serine + ATP = [HPr protein]-O-phospho-L-serine + ADP + H(+). The enzyme catalyses [HPr protein]-O-phospho-L-serine + phosphate + H(+) = [HPr protein]-L-serine + diphosphate. Functionally, catalyzes the ATP- as well as the pyrophosphate-dependent phosphorylation of a specific serine residue in HPr, a phosphocarrier protein of the phosphoenolpyruvate-dependent sugar phosphotransferase system (PTS). HprK/P also catalyzes the pyrophosphate-producing, inorganic phosphate-dependent dephosphorylation (phosphorolysis) of seryl-phosphorylated HPr (P-Ser-HPr). The two antagonistic activities of HprK/P are regulated by several intracellular metabolites, which change their concentration in response to the absence or presence of rapidly metabolisable carbon sources (glucose, fructose, etc.) in the growth medium. Therefore, by controlling the phosphorylation state of HPr, HPrK/P is a sensor enzyme that plays a major role in the regulation of carbon metabolism and sugar transport: it mediates carbon catabolite repression (CCR), and regulates PTS-catalyzed carbohydrate uptake and inducer exclusion. This Caldanaerobacter subterraneus subsp. tengcongensis (strain DSM 15242 / JCM 11007 / NBRC 100824 / MB4) (Thermoanaerobacter tengcongensis) protein is HPr kinase/phosphorylase.